Here is a 739-residue protein sequence, read N- to C-terminus: POU domain, class 2, transcription factor 1 (739 aa).

Over residues 1 to 11 (MNNPSETSKPS) the composition is skewed to polar residues. 5 disordered regions span residues 1-39 (MNNP…GGPI), 67-95 (SLNV…SVQA), 253-277 (TPIQ…EEPS), 353-378 (DSTL…RRKK), and 489-553 (SVTG…SSPL). Residues 81 to 95 (SQQPSQPSQQPSVQA) are compositionally biased toward low complexity. A POU-specific domain is found at 274-348 (EEPSDLEELE…LLEKWLNDAE (75 aa)). Residues 353–364 (DSTLSSPSALNS) are compositionally biased toward low complexity. The homeobox DNA-binding region spans 375-434 (RRKKRTSIETNIRVALEKSFLENQKPTSEEITMIADQLNMEKEVIRVWFCNRRQKEKRIN). Residues 489–552 (SVTGTTETTS…QTTSTPLSSP (64 aa)) show a composition bias toward low complexity.

The protein belongs to the POU transcription factor family. Class-2 subfamily. In terms of assembly, interacts with NR3C1, AR and PGR.

The protein resides in the nucleus. Its function is as follows. Transcription factor that binds to the octamer motif (5'-ATTTGCAT-3') and activates the promoters of the genes for some small nuclear RNAs (snRNA) and of genes such as those for histone H2B and immunoglobulins. Modulates transcription transactivation by NR3C1, AR and PGR. The polypeptide is POU domain, class 2, transcription factor 1 (POU2F1) (Gallus gallus (Chicken)).